Here is a 770-residue protein sequence, read N- to C-terminus: Cyclopiane-type diterpene synthase (770 aa).

Positions 5–335 (ITDEYAVGID…VPRYCKVDRN (331 aa)) are terpene cyclase. Aspartate 97 and aspartate 101 together coordinate Mg(2+). Residues aspartate 97, aspartate 101, 190-193 (RIVD), asparagine 234, 238-242 (SWDKE), and 328-329 (RY) each bind substrate. The DDXXD 1 motif lies at 97 to 101 (DDETD). The NSE/DTE motif lies at 234-242 (NDLFSWDKE). The prenyltransferase stretch occupies residues 336–720 (PYKDHLEKYG…WALRLLIMKL (385 aa)). The interval 371 to 397 (NQLKEPSSSTYKTHFSPLEPNPGPEQT) is disordered. Polar residues predominate over residues 374–383 (KEPSSSTYKT). 3 residues coordinate isopentenyl diphosphate: lysine 423, arginine 426, and histidine 455. Mg(2+)-binding residues include aspartate 462 and aspartate 466. The DDXXD 2 motif lies at 462–466 (DDIQD). Arginine 471 provides a ligand contact to dimethylallyl diphosphate. Arginine 472 provides a ligand contact to isopentenyl diphosphate. The dimethylallyl diphosphate site is built by lysine 548, threonine 549, glutamine 584, asparagine 591, lysine 620, and lysine 630.

This sequence in the N-terminal section; belongs to the terpene synthase family. It in the C-terminal section; belongs to the FPP/GGPP synthase family. As to quaternary structure, hexamer. Requires Mg(2+) as cofactor.

It catalyses the reaction isopentenyl diphosphate + (2E,6E)-farnesyl diphosphate = (2E,6E,10E)-geranylgeranyl diphosphate + diphosphate. The catalysed reaction is (2E,6E,10E)-geranylgeranyl diphosphate + H2O = (+)-penichrysol + diphosphate. It functions in the pathway secondary metabolite biosynthesis; terpenoid biosynthesis. Bifunctional terpene synthase converts dimethylallyl diphosphate (DMAPP) and isopentenyl diphosphate (IPP) into a cyclopiane-type diterpene. The C-terminal prenyltransferase (PT) domain of PcCS catalyzes formation of geranylgeranyl pyrophosphate (GGPP), whereas the N-terminal terpene cyclase (TC) domain catalyzes the cyclization of GGPP to the cyclopiane-type diterpene penichrysol. The sequence is that of Cyclopiane-type diterpene synthase from Penicillium chrysogenum (Penicillium notatum).